Reading from the N-terminus, the 123-residue chain is Large ribosomal subunit protein uL18 (123 aa).

Belongs to the universal ribosomal protein uL18 family. Part of the 50S ribosomal subunit; part of the 5S rRNA/L5/L18/L25 subcomplex. Contacts the 5S and 23S rRNAs.

Functionally, this is one of the proteins that bind and probably mediate the attachment of the 5S RNA into the large ribosomal subunit, where it forms part of the central protuberance. The sequence is that of Large ribosomal subunit protein uL18 from Chlamydia muridarum (strain MoPn / Nigg).